A 121-amino-acid chain; its full sequence is Large ribosomal subunit protein uL18 (121 aa).

It belongs to the universal ribosomal protein uL18 family. In terms of assembly, part of the 50S ribosomal subunit; part of the 5S rRNA/L5/L18/L25 subcomplex. Contacts the 5S and 23S rRNAs.

Functionally, this is one of the proteins that bind and probably mediate the attachment of the 5S RNA into the large ribosomal subunit, where it forms part of the central protuberance. This is Large ribosomal subunit protein uL18 from Desulfotalea psychrophila (strain LSv54 / DSM 12343).